The primary structure comprises 258 residues: Probable N-acetylglucosaminyl-phosphatidylinositol de-N-acetylase (258 aa).

The disordered stretch occupies residues Lys-147–Thr-170. Low complexity predominate over residues Ser-148–Thr-170.

Belongs to the PIGL family.

The protein resides in the endoplasmic reticulum membrane. The catalysed reaction is a 6-(N-acetyl-alpha-D-glucosaminyl)-1-(1,2-diacyl-sn-glycero-3-phospho)-1D-myo-inositol + H2O = a 6-(alpha-D-glucosaminyl)-1-(1,2-diacyl-sn-glycero-3-phospho)-1D-myo-inositol + acetate. Its pathway is glycolipid biosynthesis; glycosylphosphatidylinositol-anchor biosynthesis. Its function is as follows. Involved in the second step of GPI biosynthesis. De-N-acetylation of N-acetylglucosaminyl-phosphatidylinositol. This Dictyostelium discoideum (Social amoeba) protein is Probable N-acetylglucosaminyl-phosphatidylinositol de-N-acetylase (pigl).